The chain runs to 439 residues: Probable anion transporter 7 (439 aa).

An N-terminal signal peptide occupies residues 1 to 28 (MTALTRMKFPKRYVIVLLTFICTNVCYI). 11 consecutive transmembrane segments (helical) span residues 53–73 (MILS…GWAA), 81–101 (VLLL…LDPK), 104–124 (VILV…FPAI), 143–163 (LTTS…PSLV), 167–187 (GAQS…VIWL), 232–252 (IIFS…HYAL), 280–300 (LPYF…DHLI), 312–332 (KLLN…LPLF), 338–358 (TVLC…GFAV), 367–387 (FAGI…IVGV), and 412–432 (TVFF…LIFS).

This sequence belongs to the major facilitator superfamily. Sodium/anion cotransporter (TC 2.A.1.14) family.

The protein localises to the cell membrane. Functionally, probable anion transporter. The chain is Probable anion transporter 7 (PHT4;7) from Oryza sativa subsp. japonica (Rice).